The sequence spans 412 residues: tRNA pseudouridine synthase Pus10 (412 aa).

Residues 73–197 form the THUMP domain; it reads HEPSIKFLSN…TGSVEVQIMP (125 aa). Residues tyrosine 308 and tyrosine 376 each coordinate substrate.

The protein belongs to the pseudouridine synthase Pus10 family.

The catalysed reaction is uridine(54) in tRNA = pseudouridine(54) in tRNA. It catalyses the reaction uridine(55) in tRNA = pseudouridine(55) in tRNA. Its function is as follows. Responsible for synthesis of pseudouridine from uracil-54 and uracil-55 in the psi GC loop of transfer RNAs. In Vulcanisaeta distributa (strain DSM 14429 / JCM 11212 / NBRC 100878 / IC-017), this protein is tRNA pseudouridine synthase Pus10.